Consider the following 862-residue polypeptide: Rho guanine nucleotide exchange factor 7 (862 aa).

Positions 1–112 (MNSAEQTVTW…SLVTLNKVTA (112 aa)) constitute a Calponin-homology (CH) domain. Phosphoserine is present on residues Ser132, Ser155, Ser164, Ser228, and Ser236. One can recognise an SH3 domain in the interval 163 to 222 (NSQLVVRAKFNFQQTNEDELSFSKGDVIHVTRVEEGGWWEGTHNGRTGWFPSNYVREIKP). In terms of domain architecture, DH spans 250–430 (YYNVVLQNIL…KNLSAQCQEV (181 aa)). A PH domain is found at 452-557 (DIKTLGSVTY…WVEHLQKQTK (106 aa)). The residue at position 497 (Ser497) is a Phosphoserine. Disordered regions lie at residues 559–591 (TSVS…ADSK), 657–679 (KTMK…EFAV), and 728–748 (DQSS…EPSD). Positions 572–585 (PSHTLPSHPLTPSS) are enriched in polar residues. Residues 657-669 (KTMKKLLPKRKPE) are compositionally biased toward basic residues. Basic and acidic residues predominate over residues 670-679 (RKPSDEEFAV). Ser673 carries the phosphoserine modification. The segment covering 731–744 (SLDSLGRRSSLSRL) has biased composition (low complexity). Ser776 carries the phosphoserine modification. The stretch at 804 to 854 (KSLVDTVYALKDEVQELRQDNKKMKKSLEEEQRARKDLEKLVRKVLKNMND) forms a coiled coil.

Interacts with PAK kinases through the SH3 domain. Interacts with unphosphorylated PAK1. Interacts with ITCH. Interacts with SCRIB; interaction is direct and may play a role in regulation of apoptosis. Interacts with GIT1 and TGFB1I1. Interacts with FRMPD4 (via N-terminus). Interacts with CaMK1. Interacts with BIN2. Interacts with PTK2/FAK1 and RAC1. Interacts with PARVB. Interacts with YWHAZ. Interacts (via PH domain) with NOX1 (via FAD-binding FR-type domain). Phosphorylated on Ser-673 by CaMK1; enhancement of GEF activity and downstream activation of RAC1. Phosphorylated by PTK2/FAK1; this promotes interaction with RAC1. Seems to be expressed in the central nervous system. Isoform B, isoform C and isoform E are expressed with highest levels in brain and testis.

It localises to the cell junction. Its subcellular location is the focal adhesion. The protein resides in the cell projection. The protein localises to the ruffle. It is found in the cytoplasm. It localises to the cell cortex. Its subcellular location is the lamellipodium. Functionally, acts as a RAC1 guanine nucleotide exchange factor (GEF) and can induce membrane ruffling. May function as a positive regulator of apoptosis. Functions in cell migration, attachment and cell spreading. Promotes targeting of RAC1 to focal adhesions. Downstream of NMDA receptors and CaMKK-CaMK1 signaling cascade, promotes the formation of spines and synapses in hippocampal neurons. In Mus musculus (Mouse), this protein is Rho guanine nucleotide exchange factor 7 (Arhgef7).